A 487-amino-acid chain; its full sequence is Malonate-semialdehyde dehydrogenase (487 aa).

Residues Ala-150, Phe-152, Lys-176, Glu-179, Arg-180, Ser-229, and Thr-251 each coordinate NAD(+). Cys-284 (nucleophile) is an active-site residue. Glu-382 contacts NAD(+).

The protein belongs to the aldehyde dehydrogenase family. IolA subfamily. Homotetramer.

It catalyses the reaction 3-oxopropanoate + NAD(+) + CoA + H2O = hydrogencarbonate + acetyl-CoA + NADH + H(+). The enzyme catalyses 2-methyl-3-oxopropanoate + NAD(+) + CoA + H2O = propanoyl-CoA + hydrogencarbonate + NADH + H(+). The protein operates within polyol metabolism; myo-inositol degradation into acetyl-CoA; acetyl-CoA from myo-inositol: step 7/7. Functionally, catalyzes the oxidation of malonate semialdehyde (MSA) and methylmalonate semialdehyde (MMSA) into acetyl-CoA and propanoyl-CoA, respectively. Is involved in a myo-inositol catabolic pathway. Bicarbonate, and not CO2, is the end-product of the enzymatic reaction. This is Malonate-semialdehyde dehydrogenase from Bacillus subtilis (strain 168).